Reading from the N-terminus, the 270-residue chain is UPF0162 protein VC_2176 (270 aa).

The protein belongs to the UPF0162 family.

The chain is UPF0162 protein VC_2176 from Vibrio cholerae serotype O1 (strain ATCC 39315 / El Tor Inaba N16961).